The sequence spans 183 residues: MAQDQNHLIWLDMEMTGLQPDSDRIIEIAIVITDSQLNTVAEAPVIAVHQPDSVLDAMDEWNRNTHGKSGLTDRVKASLIGEADAEAQMLAFLQQHVPAHTSPMCGNSICQDRRFMARYMPHLEAWFHYRNLDVSTLKELAKRWRPEVYKGVEKKGKHEALADIRESIAELRHYRDNFLRLVP.

An Exonuclease domain is found at 8-171 (LIWLDMEMTG…ADIRESIAEL (164 aa)). The active site involves tyrosine 129.

Belongs to the oligoribonuclease family.

Its subcellular location is the cytoplasm. Functionally, 3'-to-5' exoribonuclease specific for small oligoribonucleotides. The chain is Oligoribonuclease from Aromatoleum aromaticum (strain DSM 19018 / LMG 30748 / EbN1) (Azoarcus sp. (strain EbN1)).